Here is an 88-residue protein sequence, read N- to C-terminus: Cell division topological specificity factor (88 aa).

The protein belongs to the MinE family.

Its function is as follows. Prevents the cell division inhibition by proteins MinC and MinD at internal division sites while permitting inhibition at polar sites. This ensures cell division at the proper site by restricting the formation of a division septum at the midpoint of the long axis of the cell. The polypeptide is Cell division topological specificity factor (Escherichia coli (strain SMS-3-5 / SECEC)).